The sequence spans 246 residues: Virulence plasmid protein pGP6-D (246 aa).

This sequence belongs to the UPF0137 (pGP6-D) family.

This is Virulence plasmid protein pGP6-D from Chlamydia psittaci (Chlamydophila psittaci).